A 271-amino-acid chain; its full sequence is Fatty acid elongase 2 (271 aa).

Residues 16 to 36 (WMIDNVDVAGFLCLLYLGLVW) form a helical membrane-spanning segment. A glycan (N-linked (GlcNAc...) asparagine) is linked at Asn-52. 2 consecutive transmembrane segments (helical) span residues 59–79 (VFIMWNLFLSTFSVIGMIVVV) and 110–130 (FWVGVFALSKIPELFDTVLLV). The HxxHH motif signature appears at 140–144 (HWYHH). His-143 serves as the catalytic Nucleophile. 3 consecutive transmembrane segments (helical) span residues 162 to 182 (IFVFVAMNLTVHAVMYFYFAM), 194 to 214 (IAPVITIMQILQMIVGSAVTM), and 241 to 261 (GVVMYLSYLYLFAALFVESYL).

It belongs to the ELO family.

The protein resides in the endoplasmic reticulum membrane. It catalyses the reaction an acyl-CoA + malonyl-CoA + H(+) = a 3-oxoacyl-CoA + CO2 + CoA. The protein operates within lipid metabolism; fatty acid biosynthesis. Functionally, involved in the synthesis of fatty acids. Elongates C10 fatty acids to C14. The polypeptide is Fatty acid elongase 2 (Trypanosoma brucei brucei (strain 927/4 GUTat10.1)).